A 362-amino-acid chain; its full sequence is Glucuronokinase 1 (362 aa).

ATP is bound at residue 126-136; it reads PRQTGLSGSSA. D179 acts as the Proton acceptor in catalysis.

This sequence belongs to the GHMP kinase family. Mg(2+) serves as cofactor. Mn(2+) is required as a cofactor. It depends on Co(2+) as a cofactor. As to expression, highly expressed in pollen. Detected in seedlings, inflorescences, seeds, leaves and roots.

It catalyses the reaction D-glucuronate + ATP = 1-phospho-alpha-D-glucuronate + ADP + H(+). In terms of biological role, sugar-1-kinase with a strict substrate specificity for D-glucuronic acid and ATP. Involved in the biosynthesis of UDP-glucuronic acid (UDP-GlcA), providing nucleotide sugars for cell-wall polymers. May be also involved in a salvage pathway for glucuronic acid. This Arabidopsis thaliana (Mouse-ear cress) protein is Glucuronokinase 1 (GLCAK1).